A 2581-amino-acid chain; its full sequence is Chromodomain-helicase-DNA-binding protein 8 (2581 aa).

Disordered stretches follow at residues 22–114 (DDSF…QTST), 253–283 (VKGSAPAGNPGATGPPLKPAVTLTSTPTQGE), 349–392 (QKIQ…SPGQ), 429–582 (ALSS…QVKR), and 596–615 (DEEEEEVDVTGPIKPEPILP). Composition is skewed to polar residues over residues 42–51 (SLDSLDQMNQ) and 94–114 (DYTTQPASQEQPAQPVLQTST). Residues 255-267 (GSAPAGNPGATGP) are compositionally biased toward low complexity. Pro residues predominate over residues 355 to 370 (PQPPSSQPQPQQPPST). Ser-432 carries the post-translational modification Phosphoserine. Basic and acidic residues-rich tracts occupy residues 445-462 (GMEENRRLEHQKKQEKAN) and 493-516 (RPEEEGEKKRRKKSAGERLKEEKP). Ser-553 and Ser-562 each carry phosphoserine. Residues 572 to 582 (QKRRSNRQVKR) are compositionally biased toward basic residues. Lys-609 is covalently cross-linked (Glycyl lysine isopeptide (Lys-Gly) (interchain with G-Cter in SUMO)). Chromo domains are found at residues 642–709 (AIVD…AQMR) and 724–790 (VEVD…RVNR). The Helicase ATP-binding domain maps to 823–997 (LFNWYNRQNC…FSLLHFLEPS (175 aa)). 836 to 843 (DEMGLGKT) is a binding site for ATP. The DEAH box signature appears at 948–951 (DEAH). In terms of domain architecture, Helicase C-terminal spans 1137–1288 (LIDKLLPKLK…KAVLQSMSGR (152 aa)). Residues Ser-1420 and Ser-1424 each carry the phosphoserine modification. The interval 1692-1712 (EDPEYKPLQGPPKDQDDEGDP) is disordered. The tract at residues 1789 to 2302 (IARREKQQRW…LVELEVECME (514 aa)) is interaction with FAM124B. Phosphoserine is present on residues Ser-1976 and Ser-1978. Residues 1991–2116 (SRTASPLPLR…TDQSRSKLYD (126 aa)) form a disordered region. The residue at position 1993 (Thr-1993) is a Phosphothreonine. Phosphoserine occurs at positions 1995 and 2008. The segment covering 2011–2021 (ETATQVPSLES) has biased composition (polar residues). A Glycyl lysine isopeptide (Lys-Gly) (interchain with G-Cter in SUMO2) cross-link involves residue Lys-2025. At Ser-2046 the chain carries Phosphoserine. Phosphothreonine is present on Thr-2051. Acidic residues predominate over residues 2064–2073 (EDEDDSDSEL). Phosphoserine occurs at positions 2069 and 2071. Residues 2076-2095 (SKLSPSSSSSSSSSSSSSST) show a composition bias toward low complexity. Residues 2103-2116 (EEKLTDQSRSKLYD) are compositionally biased toward basic and acidic residues. Ser-2182, Ser-2200, and Ser-2202 each carry phosphoserine. The interval 2189 to 2229 (GILGPGNHLLDSPSLTPGEYGDSPVPTPRSSSAASMAEEEA) is disordered. Thr-2204 is modified (phosphothreonine). A Phosphoserine modification is found at Ser-2211. Thr-2215 is modified (phosphothreonine). The span at 2218-2229 (SSSAASMAEEEA) shows a compositional bias: low complexity. Phosphoserine is present on Ser-2223. Lys-2256 participates in a covalent cross-link: Glycyl lysine isopeptide (Lys-Gly) (interchain with G-Cter in SUMO2). The disordered stretch occupies residues 2481-2581 (PSSPHVDSST…NSDSSEDADD (101 aa)). Positions 2492–2510 (LHHHHHHPHPHHHHHHHPG) are enriched in basic residues. The residue at position 2519 (Ser-2519) is a Phosphoserine. Positions 2519–2528 (SPVTTASGTT) are enriched in polar residues. Over residues 2536-2550 (PEEDDDEDEEDDDDL) the composition is skewed to acidic residues.

This sequence belongs to the SNF2/RAD54 helicase family. CHD8 subfamily. As to quaternary structure, interacts with p53/TP53, histone H1, CTNNB1, CTCF and PIAS3. Component of some MLL1/MLL complex, at least composed of the core components KMT2A/MLL1, ASH2L, HCFC1/HCF1, WDR5 and RBBP5, as well as the facultative components BACC1, CHD8, E2F6, HSP70, INO80C, KANSL1, LAS1L, MAX, MCRS1, MGA, KAT8/MOF, PELP1, PHF20, PRP31, RING2, RUVB1/TIP49A, RUVB2/TIP49B, SENP3, TAF1, TAF4, TAF6, TAF7, TAF9 and TEX10. Interacts with CHD7. Interacts with FAM124B. Interacts with TLK2. Interacts with HNRNPL in an RNA-dependent manner. In terms of processing, sumoylated.

The protein localises to the nucleus. It catalyses the reaction ATP + H2O = ADP + phosphate + H(+). In terms of biological role, ATP-dependent chromatin-remodeling factor, it slides nucleosomes along DNA; nucleosome sliding requires ATP. Acts as a transcription repressor by remodeling chromatin structure and recruiting histone H1 to target genes. Suppresses p53/TP53-mediated apoptosis by recruiting histone H1 and preventing p53/TP53 transactivation activity. Acts as a negative regulator of Wnt signaling pathway by regulating beta-catenin (CTNNB1) activity. Negatively regulates CTNNB1-targeted gene expression by being recruited specifically to the promoter regions of several CTNNB1 responsive genes. Involved in both enhancer blocking and epigenetic remodeling at chromatin boundary via its interaction with CTCF. Acts as a suppressor of STAT3 activity by suppressing the LIF-induced STAT3 transcriptional activity. Also acts as a transcription activator via its interaction with ZNF143 by participating in efficient U6 RNA polymerase III transcription. Regulates alternative splicing of a core group of genes involved in neuronal differentiation, cell cycle and DNA repair. Enables H3K36me3-coupled transcription elongation and co-transcriptional RNA processing likely via interaction with HNRNPL. This is Chromodomain-helicase-DNA-binding protein 8 from Homo sapiens (Human).